A 180-amino-acid chain; its full sequence is Large ribosomal subunit protein uL5 (180 aa).

The protein belongs to the universal ribosomal protein uL5 family. As to quaternary structure, part of the 50S ribosomal subunit; part of the 5S rRNA/L5/L18/L25 subcomplex. Contacts the 5S rRNA and the P site tRNA. Forms a bridge to the 30S subunit in the 70S ribosome.

This is one of the proteins that bind and probably mediate the attachment of the 5S RNA into the large ribosomal subunit, where it forms part of the central protuberance. In the 70S ribosome it contacts protein S13 of the 30S subunit (bridge B1b), connecting the 2 subunits; this bridge is implicated in subunit movement. Contacts the P site tRNA; the 5S rRNA and some of its associated proteins might help stabilize positioning of ribosome-bound tRNAs. The sequence is that of Large ribosomal subunit protein uL5 from Streptococcus thermophilus (strain CNRZ 1066).